We begin with the raw amino-acid sequence, 181 residues long: Translation initiation factor IF-3 (181 aa).

This sequence belongs to the IF-3 family. In terms of assembly, monomer.

Its subcellular location is the cytoplasm. Its function is as follows. IF-3 binds to the 30S ribosomal subunit and shifts the equilibrium between 70S ribosomes and their 50S and 30S subunits in favor of the free subunits, thus enhancing the availability of 30S subunits on which protein synthesis initiation begins. The polypeptide is Translation initiation factor IF-3 (Mycoplasma capricolum subsp. capricolum (strain California kid / ATCC 27343 / NCTC 10154)).